The chain runs to 362 residues: Vignain (362 aa).

A signal peptide spans 1-20 (MAMKKLLWVVLSLSLVLGVA). Positions 21-126 (NSFDFHEKDL…SGTFMYEKVG (106 aa)) are cleaved as a propeptide — activation peptide. 3 disulfides stabilise this stretch: cysteine 149–cysteine 191, cysteine 183–cysteine 224, and cysteine 282–cysteine 334. The active site involves cysteine 152. Residues histidine 288 and asparagine 309 contribute to the active site. N-linked (GlcNAc...) asparagine glycans are attached at residues asparagine 326 and asparagine 346. A propeptide spans 353–362 (GSLSSPKDEL) (removed in mature form). The Prevents secretion from ER signature appears at 359-362 (KDEL).

It belongs to the peptidase C1 family. Post-translationally, the mature protein is not glycosylated. The precursor stored in the endoplasmic reticulum lumen is processed during the transport to proteins bodies to two dominant mature forms that differ by a single amino acid residue at the N-terminus.

It is found in the endoplasmic reticulum lumen. The protein resides in the vacuole. Its subcellular location is the aleurone grain. Functionally, thought to be involved in the hydrolysis of stored seed proteins. In vitro, catalyzes the hydrolysis of proteins, such as azocasein. Shows a preferential cleavage for Asn-|-Xaa in small molecule substrates such as Boc-Asn-|-OPHNO(2). The protein is Vignain of Vigna mungo (Black gram).